The following is a 198-amino-acid chain: tRNA (pseudouridine(54)-N(1))-methyltransferase (198 aa).

Residues Leu134 and Gly155 each coordinate S-adenosyl-L-methionine.

This sequence belongs to the methyltransferase superfamily. TrmY family. As to quaternary structure, homodimer.

The protein resides in the cytoplasm. The catalysed reaction is pseudouridine(54) in tRNA + S-adenosyl-L-methionine = N(1)-methylpseudouridine(54) in tRNA + S-adenosyl-L-homocysteine + H(+). Its function is as follows. Specifically catalyzes the N1-methylation of pseudouridine at position 54 (Psi54) in tRNAs. The sequence is that of tRNA (pseudouridine(54)-N(1))-methyltransferase from Thermococcus kodakarensis (strain ATCC BAA-918 / JCM 12380 / KOD1) (Pyrococcus kodakaraensis (strain KOD1)).